The primary structure comprises 538 residues: Chaperonin GroEL (538 aa).

Residues 29–32, 86–90, Gly413, 476–478, and Asp492 contribute to the ATP site; these read TLGP, DGTTT, and NAA.

This sequence belongs to the chaperonin (HSP60) family. In terms of assembly, forms a cylinder of 14 subunits composed of two heptameric rings stacked back-to-back. Interacts with the co-chaperonin GroES.

It localises to the cytoplasm. It catalyses the reaction ATP + H2O + a folded polypeptide = ADP + phosphate + an unfolded polypeptide.. Functionally, together with its co-chaperonin GroES, plays an essential role in assisting protein folding. The GroEL-GroES system forms a nano-cage that allows encapsulation of the non-native substrate proteins and provides a physical environment optimized to promote and accelerate protein folding. In Bacillus sp. (strain PS3), this protein is Chaperonin GroEL.